Here is a 259-residue protein sequence, read N- to C-terminus: uncharacterized protein (259 aa).

3 disordered regions span residues 22–68 (GLQP…VSFG), 111–133 (REEQ…DEVE), and 181–202 (LGGK…KKKQ). Residues 50–63 (NEEEDAISDMEDKE) are compositionally biased toward acidic residues. Serine 127 is modified (phosphoserine).

This is an uncharacterized protein from Schizosaccharomyces pombe (strain 972 / ATCC 24843) (Fission yeast).